Reading from the N-terminus, the 345-residue chain is MNLQEKIEDLRKRTLSDLLSVADEKTLNNLRTVMLGKKGELTEILKGMKDLTNEERPVIGALANAFRDEFGAKFEAKKLEIEQAVMNAALESETLDVTLPGKAQKKGSRHILTQTQEEIEEIFLGMGYEIVDGYEVETDHYNFERMNLPKDHPARDMQDTFYITNEVLLRTHTSPMQARTMDAHDFSKGGLRMIAPGRVYRRDTDDATHSHQFHQIEGLVVDKNITMADLKGTLDLVMKKMFGQERELRWRPSYFPFTEPSVEVDISCFKCGGKGCNVCKHTGWIEILGAGMVHPNVLEMSGLDSSVYSGFAFGLGQERIAMLRYGINDIRGFYQGDVRFLEQFD.

E259 provides a ligand contact to Mg(2+).

It belongs to the class-II aminoacyl-tRNA synthetase family. Phe-tRNA synthetase alpha subunit type 1 subfamily. In terms of assembly, tetramer of two alpha and two beta subunits. Mg(2+) is required as a cofactor.

It localises to the cytoplasm. It carries out the reaction tRNA(Phe) + L-phenylalanine + ATP = L-phenylalanyl-tRNA(Phe) + AMP + diphosphate + H(+). This Lactococcus lactis subsp. cremoris (strain MG1363) protein is Phenylalanine--tRNA ligase alpha subunit.